The following is an 819-amino-acid chain: DNA mismatch repair protein MutS (819 aa).

ATP is bound at residue 596 to 603; it reads GPNMSGKS.

Belongs to the DNA mismatch repair MutS family.

This protein is involved in the repair of mismatches in DNA. It is possible that it carries out the mismatch recognition step. This protein has a weak ATPase activity. This Thermosipho melanesiensis (strain DSM 12029 / CIP 104789 / BI429) protein is DNA mismatch repair protein MutS.